A 336-amino-acid chain; its full sequence is Adenosine deaminase (336 aa).

Zn(2+) is bound by residues H15 and H17. 3 residues coordinate substrate: H17, D19, and G172. A Zn(2+)-binding site is contributed by H199. E202 functions as the Proton donor in the catalytic mechanism. D279 is a binding site for Zn(2+).

The protein belongs to the metallo-dependent hydrolases superfamily. Adenosine and AMP deaminases family. Adenosine deaminase subfamily. Requires Zn(2+) as cofactor.

The enzyme catalyses adenosine + H2O + H(+) = inosine + NH4(+). The catalysed reaction is 2'-deoxyadenosine + H2O + H(+) = 2'-deoxyinosine + NH4(+). In terms of biological role, catalyzes the hydrolytic deamination of adenosine and 2-deoxyadenosine. The sequence is that of Adenosine deaminase from Streptococcus thermophilus (strain ATCC BAA-491 / LMD-9).